The sequence spans 396 residues: Chalcone synthase (396 aa).

Cysteine 167 is an active-site residue.

The protein belongs to the thiolase-like superfamily. Chalcone/stilbene synthases family.

It carries out the reaction (E)-4-coumaroyl-CoA + 3 malonyl-CoA + 3 H(+) = 2',4,4',6'-tetrahydroxychalcone + 3 CO2 + 4 CoA. The protein operates within secondary metabolite biosynthesis; flavonoid biosynthesis. Its function is as follows. The primary product of this enzyme is 4,2',4',6'-tetrahydroxychalcone (also termed naringenin-chalcone or chalcone) which can under specific conditions spontaneously isomerize into naringenin. In Chrysosplenium americanum (American golden saxifrage), this protein is Chalcone synthase (CHS).